The sequence spans 495 residues: Mesoderm induction early response protein 1 (495 aa).

Disordered regions lie at residues 1–25 (MAEP…FEPS) and 76–131 (GSTV…PSFT). The span at 83–94 (GEEEEDEEDMDN) shows a compositional bias: acidic residues. The segment covering 120–130 (QSSNDDPTPSF) has biased composition (polar residues). The ELM2 domain occupies 171–269 (KEIMVGSMFQ…EALRRLRFNV (99 aa)). The 53-residue stretch at 274-326 (EELSVWTEEECRNFEQGLKAYGKDFHLIQANKVRTRSVGECVAFYYMWKKSER) folds into the SANT domain. 2 disordered regions span residues 356 to 397 (DESE…NGVS) and 416 to 495 (HLNG…HGEV). Polar residues-rich tracts occupy residues 387–397 (TASNNTQNGVS) and 420–440 (PTIS…YNRE). Over residues 462–476 (TNERPIKRQRMDSPG) the composition is skewed to basic and acidic residues. Residues 477–489 (KESTGSSEFSQEV) show a composition bias toward polar residues.

Its subcellular location is the nucleus. In terms of biological role, transcriptional repressor regulating the expression of a number of genes. Probably functions through recruitment of histone deacetylases involved in chromatin silencing. The sequence is that of Mesoderm induction early response protein 1 (mier1) from Xenopus laevis (African clawed frog).